Consider the following 448-residue polypeptide: Adenylosuccinate synthetase (448 aa).

GTP-binding positions include 22 to 28 and 50 to 52; these read GDEGKGK and GHT. The Proton acceptor role is filled by D23. Residues D23 and G50 each coordinate Mg(2+). Residues 23–26, 48–51, T139, R153, Q234, T249, and R321 contribute to the IMP site; these read DEGK and NAGH. The active-site Proton donor is the H51. Residue 317–323 participates in substrate binding; sequence SVTGRPR. Residues R323, 349–351, and 431–433 contribute to the GTP site; these read KLD and STG.

This sequence belongs to the adenylosuccinate synthetase family. In terms of assembly, homodimer. Mg(2+) serves as cofactor.

The protein localises to the cytoplasm. The enzyme catalyses IMP + L-aspartate + GTP = N(6)-(1,2-dicarboxyethyl)-AMP + GDP + phosphate + 2 H(+). Its pathway is purine metabolism; AMP biosynthesis via de novo pathway; AMP from IMP: step 1/2. Its function is as follows. Plays an important role in the de novo pathway of purine nucleotide biosynthesis. Catalyzes the first committed step in the biosynthesis of AMP from IMP. In Burkholderia mallei (strain NCTC 10247), this protein is Adenylosuccinate synthetase.